The following is a 271-amino-acid chain: MVLIKEFRVVLPCSVQEYQVGQLYSVAEASKNETGGGEGIEVLKNEPYENDGEKGQYTHKIYHLKSKVPAFVRMIAPEGSLVFHEKAWNAYPYCRTIVTNEYMKDDFFIKIETWHKPDLGTLENVHGLDPNTWKTVEIVHIDIADRSQVEPADYKADEDPALFHSVKTKRGPLGPNWKKELANTPDCPRMCAYKLVTIKFKWWGLQSKVENFIQKQEKRIFTNLHRQLFCWIDKWIDLTMEDIRRMEDETQKELETMRKKGSVRGTSAADA.

Lys215 is modified (N6-acetyllysine). Ser262 carries the phosphoserine; by PKC modification.

Belongs to the PtdIns transfer protein family. PI transfer class I subfamily. Post-translationally, constitutive phosphorylation of Ser-262 has no effect on phospholipid transfer activity but is required for Golgi targeting.

It localises to the golgi apparatus. Its subcellular location is the golgi apparatus membrane. The protein localises to the endoplasmic reticulum membrane. The catalysed reaction is a 1,2-diacyl-sn-glycero-3-phosphocholine(in) = a 1,2-diacyl-sn-glycero-3-phosphocholine(out). It catalyses the reaction a 1,2-diacyl-sn-glycero-3-phospho-(1D-myo-inositol)(in) = a 1,2-diacyl-sn-glycero-3-phospho-(1D-myo-inositol)(out). It carries out the reaction an N-(acyl)-sphingosylphosphocholine(in) = an N-(acyl)-sphingosylphosphocholine(out). In terms of biological role, catalyzes the transfer of phosphatidylinositol, phosphatidylcholine and sphingomyelin between membranes. Required for COPI-mediated retrograde transport from the Golgi to the endoplasmic reticulum; phosphatidylinositol and phosphatidylcholine transfer activity is essential for this function. The chain is Phosphatidylinositol transfer protein beta isoform (Pitpnb) from Mus musculus (Mouse).